The chain runs to 317 residues: 8-oxo-(d)GTP phosphatase (317 aa).

The region spanning 15–148 is the Nudix hydrolase domain; the sequence is RIVYAAGAVL…DRKVLCRFAK (134 aa). Substrate contacts are provided by residues 43–46, Asp48, and 53–55; these read RPRY and KGK. Mg(2+)-binding residues include Lys53, Glu69, and Glu73. The short motif at 54–75 is the Nudix box element; the sequence is GKVDPGETAPVGAVREILEETG. Residues Tyr89, Lys99, Glu118, and Tyr136 each contribute to the substrate site. Residue Glu118 participates in Mg(2+) binding.

This sequence belongs to the Nudix hydrolase family. Requires Mg(2+) as cofactor.

It carries out the reaction 8-oxo-dGTP + H2O = 8-oxo-dGDP + phosphate + H(+). It catalyses the reaction 8-oxo-GTP + H2O = 8-oxo-GDP + phosphate + H(+). Functionally, catalyzes the conversion of 8-oxo-dGTP to 8-oxo-dGDP, and 8-oxo-GTP to 8-oxo-GDP. In Mycobacterium tuberculosis (strain CDC 1551 / Oshkosh), this protein is 8-oxo-(d)GTP phosphatase.